Consider the following 329-residue polypeptide: MKLTVLVGGVGGARFLLGAQRLLGLGQFATPDDNARHELTAVVNIGDDAWIHGLRICPDLDTCMYTLGGGVDPQRGWGHRDETWHAKEELARYGVQPDWFQLGDRDLATHLVRTQMLRAGYPLAQITTALCDRWQPGATLLPVSNDRCETHVVVTDPTDQQQRAIHFQEWWVRYRAELPTHSFAFIGTETASATTEVTAAIADADVVMLAPSNPVVSIGAILAVPGIRAALRATRAPIIGYSPIIAGKPVRGMADACLSVIGVDTTAEAVGRHYGARAATGVLDYWLVAEGDQAEIDSVTVRSIPLLMSDPEATAQMVRAGLELAGVTV.

Position 61 (Asp61) interacts with 7,8-didemethyl-8-hydroxy-5-deazariboflavin.

Belongs to the CofD family. Homodimer. Mg(2+) is required as a cofactor.

The catalysed reaction is enolpyruvoyl-2-diphospho-5'-guanosine + 7,8-didemethyl-8-hydroxy-5-deazariboflavin = dehydro coenzyme F420-0 + GMP + H(+). It functions in the pathway cofactor biosynthesis; coenzyme F420 biosynthesis. Its function is as follows. Catalyzes the transfer of the phosphoenolpyruvate moiety from enoylpyruvoyl-2-diphospho-5'-guanosine (EPPG) to 7,8-didemethyl-8-hydroxy-5-deazariboflavin (FO) with the formation of dehydro coenzyme F420-0 and GMP. The chain is Phosphoenolpyruvate transferase from Mycobacterium ulcerans (strain Agy99).